Consider the following 470-residue polypeptide: ATP synthase subunit beta (470 aa).

156–163 provides a ligand contact to ATP; it reads GGAGVGKT.

The protein belongs to the ATPase alpha/beta chains family. In terms of assembly, F-type ATPases have 2 components, CF(1) - the catalytic core - and CF(0) - the membrane proton channel. CF(1) has five subunits: alpha(3), beta(3), gamma(1), delta(1), epsilon(1). CF(0) has three main subunits: a(1), b(2) and c(9-12). The alpha and beta chains form an alternating ring which encloses part of the gamma chain. CF(1) is attached to CF(0) by a central stalk formed by the gamma and epsilon chains, while a peripheral stalk is formed by the delta and b chains.

The protein resides in the cell inner membrane. The enzyme catalyses ATP + H2O + 4 H(+)(in) = ADP + phosphate + 5 H(+)(out). Functionally, produces ATP from ADP in the presence of a proton gradient across the membrane. The catalytic sites are hosted primarily by the beta subunits. In Thermosipho africanus (strain TCF52B), this protein is ATP synthase subunit beta.